A 510-amino-acid chain; its full sequence is Serine/threonine protein phosphatase 2A 57 kDa regulatory subunit B' kappa isoform (510 aa).

A disordered region spans residues 1-51 (MWKGFLSKLPRKTSASGRGADLDSGQCSNGAGNGNPIQRTSSCGSIPSGRS). A compositionally biased stretch (polar residues) spans 25 to 51 (GQCSNGAGNGNPIQRTSSCGSIPSGRS). Residues Thr-476 and Thr-493 each carry the phosphothreonine modification. Ser-502 is modified (phosphoserine). Thr-508 carries the phosphothreonine modification.

It belongs to the phosphatase 2A regulatory subunit B56 family. PP2A consists of a common heteromeric enzyme, composed of a catalytic subunit (subunits C), a constant regulatory subunit (subunit A), and a variety of regulatory subunits such as subunits B (the R2/B/PR55/B55, R3/B''/PR72/PR130/PR59 and R5/B'/B56 families). Interacts with SIT1. In terms of processing, phosphorylated at Thr-476, Thr-493, Ser-502 and Thr-508 by SIT1. In terms of tissue distribution, expressed in root stele and epidermal cells.

It is found in the cytoplasm. It localises to the cytosol. Its subcellular location is the cell membrane. Functionally, b regulatory subunit of phosphatase 2A (PP2A) involved in salt stress response. Under salt stress conditions, required for the catalytic activity of PP2A and the dephosphorylation of SIT1, a negative regulator of salt tolerance. Dephosphorylation of SIT1 turns off salt-induced SIT1 activity directly, which has a positive effect on salt tolerance. This Oryza sativa subsp. japonica (Rice) protein is Serine/threonine protein phosphatase 2A 57 kDa regulatory subunit B' kappa isoform.